Consider the following 166-residue polypeptide: Signal peptidase complex catalytic subunit SEC11 (166 aa).

Over 1 to 9 (MNIRQQLTQ) the chain is Cytoplasmic. The helical; Signal-anchor for type II membrane protein transmembrane segment at 10–30 (LLTLGYVFASAFMLWKTLSVV) threads the bilayer. Over 31-166 (ANLHSPIVVV…LGLSSLFSNE (136 aa)) the chain is Lumenal. Residues S44, H83, and D108 each act as charge relay system in the active site. The interval 152 to 163 (GLLGLLGLSSLF) is C-terminal short (CTS) helix.

It belongs to the peptidase S26B family. In terms of assembly, component of the signal peptidase complex (SPC) composed of a catalytic subunit SEC11 and three accessory subunits SPC1, SPC2 and SPC3. The complex induces a local thinning of the ER membrane which is used to measure the length of the signal peptide (SP) h-region of protein substrates. This ensures the selectivity of the complex towards h-regions shorter than 18-20 amino acids. SPC associates with the translocon complex.

Its subcellular location is the endoplasmic reticulum membrane. The enzyme catalyses Cleavage of hydrophobic, N-terminal signal or leader sequences from secreted and periplasmic proteins.. In terms of biological role, catalytic component of the signal peptidase complex (SPC) which catalyzes the cleavage of N-terminal signal sequences from nascent proteins as they are translocated into the lumen of the endoplasmic reticulum. Specifically cleaves N-terminal signal peptides that contain a hydrophobic alpha-helix (h-region) shorter than 18-20 amino acids. This Lodderomyces elongisporus (strain ATCC 11503 / CBS 2605 / JCM 1781 / NBRC 1676 / NRRL YB-4239) (Yeast) protein is Signal peptidase complex catalytic subunit SEC11 (SEC11).